A 602-amino-acid polypeptide reads, in one-letter code: Elongation factor 4 (602 aa).

In terms of domain architecture, tr-type G spans 2–184 (NHIRNFSIIA…LIVAKVPAPR (183 aa)). Residues 14 to 19 (DHGKST) and 131 to 134 (NKMD) contribute to the GTP site.

This sequence belongs to the TRAFAC class translation factor GTPase superfamily. Classic translation factor GTPase family. LepA subfamily.

Its subcellular location is the cell inner membrane. The enzyme catalyses GTP + H2O = GDP + phosphate + H(+). Functionally, required for accurate and efficient protein synthesis under certain stress conditions. May act as a fidelity factor of the translation reaction, by catalyzing a one-codon backward translocation of tRNAs on improperly translocated ribosomes. Back-translocation proceeds from a post-translocation (POST) complex to a pre-translocation (PRE) complex, thus giving elongation factor G a second chance to translocate the tRNAs correctly. Binds to ribosomes in a GTP-dependent manner. The sequence is that of Elongation factor 4 from Paracidovorax citrulli (strain AAC00-1) (Acidovorax citrulli).